We begin with the raw amino-acid sequence, 300 residues long: ADP,ATP carrier protein 2 (300 aa).

Solcar repeat units lie at residues 8–100 (VAFI…YKQV), 113–203 (RYFI…ARGM), and 214–299 (VSWA…IKKV). Transmembrane regions (helical) follow at residues 10–39 (FIKD…LLLQ), 77–101 (LANV…KQVF), 112–132 (TRYF…SLCF), 181–201 (VSVQ…DTAR), and 213–233 (YVSW…SYPF). ADP is bound by residues arginine 82 and lysine 94. Arginine 237 lines the ADP pocket. The tract at residues 237 to 242 (RRRMMM) is important for transport activity. Positions 237–242 (RRRMMM) match the Nucleotide carrier signature motif motif. Residues 276–293 (AFSNVLRGTGGAFVLVLY) traverse the membrane as a helical segment.

This sequence belongs to the mitochondrial carrier (TC 2.A.29) family. As to quaternary structure, monomer.

The protein resides in the mitochondrion inner membrane. It carries out the reaction ADP(in) + ATP(out) = ADP(out) + ATP(in). The matrix-open state (m-state) is inhibited by the membrane-permeable bongkrekic acid (BKA). The cytoplasmic-open state (c-state) is inhibited by the membrane-impermeable toxic inhibitor carboxyatractyloside (CATR). In terms of biological role, ADP:ATP antiporter that mediates import of ADP into the mitochondrial matrix for ATP synthesis, and export of ATP out to fuel the cell. Cycles between the cytoplasmic-open state (c-state) and the matrix-open state (m-state): operates by the alternating access mechanism with a single substrate-binding site intermittently exposed to either the cytosolic (c-state) or matrix (m-state) side of the inner mitochondrial membrane. The polypeptide is ADP,ATP carrier protein 2 (Anopheles gambiae (African malaria mosquito)).